Reading from the N-terminus, the 382-residue chain is Type 2 DNA topoisomerase 6 subunit A (382 aa).

The Topo IIA-type catalytic domain occupies 14 to 155 (YDPQKVLKKL…MHITADRRGY (142 aa)). The active-site O-(5'-phospho-DNA)-tyrosine intermediate is the Tyr-108. Mg(2+) contacts are provided by Glu-202 and Asp-254.

This sequence belongs to the TOP6A family. Homodimer. Heterotetramer of two Top6A and two Top6B chains. Mg(2+) is required as a cofactor.

It carries out the reaction ATP-dependent breakage, passage and rejoining of double-stranded DNA.. In terms of biological role, relaxes both positive and negative superturns and exhibits a strong decatenase activity. This Pyrococcus abyssi (strain GE5 / Orsay) protein is Type 2 DNA topoisomerase 6 subunit A.